The following is a 424-amino-acid chain: Trigger factor (424 aa).

The region spanning 163–248 (GDTVVLDFEG…IHEIKAKELP (86 aa)) is the PPIase FKBP-type domain.

It belongs to the FKBP-type PPIase family. Tig subfamily.

The protein resides in the cytoplasm. The catalysed reaction is [protein]-peptidylproline (omega=180) = [protein]-peptidylproline (omega=0). Involved in protein export. Acts as a chaperone by maintaining the newly synthesized protein in an open conformation. Functions as a peptidyl-prolyl cis-trans isomerase. The protein is Trigger factor of Bacillus pumilus (strain SAFR-032).